Reading from the N-terminus, the 269-residue chain is Shikimate dehydrogenase (NADP(+)) (269 aa).

Residues 22 to 24 (TLS) and Thr68 each bind shikimate. The active-site Proton acceptor is Lys72. The shikimate site is built by Asn93 and Asp104. NADP(+) is bound by residues 128–132 (GAGGA), 152–157 (NRTKSR), and Phe210. Shikimate is bound at residue Tyr212. Gly233 is an NADP(+) binding site.

This sequence belongs to the shikimate dehydrogenase family. As to quaternary structure, homodimer.

The catalysed reaction is shikimate + NADP(+) = 3-dehydroshikimate + NADPH + H(+). The protein operates within metabolic intermediate biosynthesis; chorismate biosynthesis; chorismate from D-erythrose 4-phosphate and phosphoenolpyruvate: step 4/7. Its function is as follows. Involved in the biosynthesis of the chorismate, which leads to the biosynthesis of aromatic amino acids. Catalyzes the reversible NADPH linked reduction of 3-dehydroshikimate (DHSA) to yield shikimate (SA). This Saccharolobus solfataricus (strain ATCC 35092 / DSM 1617 / JCM 11322 / P2) (Sulfolobus solfataricus) protein is Shikimate dehydrogenase (NADP(+)).